Here is a 99-residue protein sequence, read N- to C-terminus: Large ribosomal subunit protein uL23 (99 aa).

Belongs to the universal ribosomal protein uL23 family. Part of the 50S ribosomal subunit. Contacts protein L29, and trigger factor when it is bound to the ribosome.

Its function is as follows. One of the early assembly proteins it binds 23S rRNA. One of the proteins that surrounds the polypeptide exit tunnel on the outside of the ribosome. Forms the main docking site for trigger factor binding to the ribosome. This chain is Large ribosomal subunit protein uL23, found in Oenococcus oeni (strain ATCC BAA-331 / PSU-1).